The chain runs to 894 residues: Bifunctional enzyme RhaA/RhaB (894 aa).

Residues 1–465 (MGEYRLAVDI…TAFPVTYFLP (465 aa)) form a rhamnulokinase region. The tract at residues 466–894 (QRSESHVSSR…KRESEKAKQR (429 aa)) is L-rhamnose isomerase. Mn(2+)-binding residues include histidine 730, aspartate 762, and aspartate 764.

In the N-terminal section; belongs to the rhamnulokinase family. This sequence in the C-terminal section; belongs to the rhamnose isomerase family. The cofactor is Mn(2+).

It is found in the cytoplasm. The enzyme catalyses L-rhamnulose + ATP = L-rhamnulose 1-phosphate + ADP + H(+). The catalysed reaction is L-rhamnopyranose = L-rhamnulose. It participates in carbohydrate degradation; L-rhamnose degradation; glycerone phosphate from L-rhamnose: step 1/3. It functions in the pathway carbohydrate degradation; L-rhamnose degradation; glycerone phosphate from L-rhamnose: step 2/3. The protein is Bifunctional enzyme RhaA/RhaB (rhaAB) of Shouchella clausii (strain KSM-K16) (Alkalihalobacillus clausii).